Consider the following 888-residue polypeptide: Bifunctional lysine-specific demethylase and histidyl-hydroxylase NO66 (888 aa).

3 disordered regions span residues 83 to 157, 187 to 208, and 261 to 446; these read AAAK…GSFS, SNNSDFDFDSDGDSNDFDDSDA, and NSTS…NKLS. A compositionally biased stretch (basic and acidic residues) spans 98–108; it reads REKNIAKKQPE. The segment covering 116–139 has biased composition (polar residues); that stretch reads ENVQKQLENGQENNGTLINLSNGK. Residues 192–207 are compositionally biased toward acidic residues; it reads FDFDSDGDSNDFDDSD. The span at 273–284 shows a compositional bias: basic and acidic residues; that stretch reads VEPRKAAKRNEP. Positions 392 to 403 are enriched in low complexity; the sequence is KNKNNDNNNIDT. Over residues 404 to 429 the composition is skewed to basic and acidic residues; it reads NNKKDANNKKDANNNKDINNKKDANN. A compositionally biased stretch (low complexity) spans 430–444; it reads NKDTNNNKDNNNKNK. The 146-residue stretch at 564 to 709 folds into the JmjC domain; that stretch reads CSIRILNPST…NLLEVLMPSV (146 aa). The Fe cation site is built by histidine 610, aspartate 612, and histidine 675.

It belongs to the ROX family. NO66 subfamily. It depends on Fe(2+) as a cofactor.

It localises to the nucleus. The catalysed reaction is N(6),N(6)-dimethyl-L-lysyl(36)-[histone H3] + 2 2-oxoglutarate + 2 O2 = L-lysyl(36)-[histone H3] + 2 formaldehyde + 2 succinate + 2 CO2. Its function is as follows. Oxygenase that can act as both a histone lysine demethylase and a ribosomal histidine hydroxylase. Specifically demethylates 'Lys-4' (H3K4me) and 'Lys-36' (H3K36me) of histone H3, thereby playing a central role in histone code. In Drosophila mojavensis (Fruit fly), this protein is Bifunctional lysine-specific demethylase and histidyl-hydroxylase NO66.